The following is a 438-amino-acid chain: Porin AaxA (438 aa).

An N-terminal signal peptide occupies residues 1-21 (MISFRFLLLSGLCALGISSYA).

Belongs to the OprB family.

The protein localises to the cell outer membrane. Functionally, facilitates L-arginine uptake, as part of the AaxABC system. The arginine uptake by the bacterium in the macrophage may be a virulence factor against the host innate immune response. The sequence is that of Porin AaxA (aaxA) from Chlamydia pneumoniae (Chlamydophila pneumoniae).